Consider the following 577-residue polypeptide: Urease subunit alpha (577 aa).

Positions 136–577 (GGIDCHVHFI…LPMAQRYFLF (442 aa)) constitute a Urease domain. Positions 141, 143, and 224 each coordinate Ni(2+). At K224 the chain carries N6-carboxylysine. H226 is a binding site for substrate. Residues H253 and H279 each contribute to the Ni(2+) site. Catalysis depends on H327, which acts as the Proton donor. D367 serves as a coordination point for Ni(2+).

Belongs to the metallo-dependent hydrolases superfamily. Urease alpha subunit family. In terms of assembly, heterotrimer of UreA (gamma), UreB (beta) and UreC (alpha) subunits. Three heterotrimers associate to form the active enzyme. Requires Ni cation as cofactor. Post-translationally, carboxylation allows a single lysine to coordinate two nickel ions.

It is found in the cytoplasm. The catalysed reaction is urea + 2 H2O + H(+) = hydrogencarbonate + 2 NH4(+). Its pathway is nitrogen metabolism; urea degradation; CO(2) and NH(3) from urea (urease route): step 1/1. This Mycobacteroides abscessus (strain ATCC 19977 / DSM 44196 / CCUG 20993 / CIP 104536 / JCM 13569 / NCTC 13031 / TMC 1543 / L948) (Mycobacterium abscessus) protein is Urease subunit alpha.